We begin with the raw amino-acid sequence, 220 residues long: Claudin-22 (220 aa).

Topologically, residues 1–10 (MGLVFRTATQ) are cytoplasmic. Residues 11 to 31 (AAALLLSLLGWVLSCLTNYLP) form a helical membrane-spanning segment. The Extracellular segment spans residues 32 to 81 (HWKNLNLELNEMENWTMGLWKSCVIQEEVGRQCKDFDSFLALPAELQVSR). A helical transmembrane segment spans residues 82-102 (VLMSLCNGLGLLGLLASGCGL). Topologically, residues 103–120 (DCLRLGETQEGLKKRLLT) are cytoplasmic. A helical membrane pass occupies residues 121 to 141 (LGGTLLWTSGVMVLVPVSWVA). Topologically, residues 142–164 (HKTVREFWDETMPEIVPRWEFGE) are extracellular. The chain crosses the membrane as a helical span at residues 165 to 185 (ALFLGWFAGFCLVLGGCVLHC). At 186-220 (AACWSPAPAASSHYAVAGPRDHQQHLELKQANPEI) the chain is on the cytoplasmic side.

This sequence belongs to the claudin family.

Its subcellular location is the cell junction. It localises to the tight junction. The protein resides in the cell membrane. Its function is as follows. Plays a major role in tight junction-specific obliteration of the intercellular space, through calcium-independent cell-adhesion activity. This Mus musculus (Mouse) protein is Claudin-22 (Cldn22).